The following is a 2282-amino-acid chain: Zonadhesin (2282 aa).

MAM domains are found at residues 1-147 (MFFA…PCGE) and 150-315 (PQCV…TCHV). Topologically, residues 1-2235 (MFFATGRASA…VLLPPKPDTS (2235 aa)) are extracellular. N-linked (GlcNAc...) asparagine glycosylation is found at Asn112 and Asn272. The 26 X approximate heptapeptide repeats (mucin-like domain) stretch occupies residues 315-498 (VPVPPVIPIK…STTTTPSPTT (184 aa)). The span at 333 to 356 (PTVPAEGTTEPPEGTIELPEGTTK) shows a compositional bias: low complexity. The interval 333–495 (PTVPAEGTTE…TTLSTTTTPS (163 aa)) is disordered. The segment covering 360-369 (ETTELPEEIT) has biased composition (acidic residues). The span at 379 to 398 (TEPPTVPTEPPTVPTEPPTV) shows a compositional bias: pro residues. Low complexity-rich tracts occupy residues 399–420 (PTEKPTVLTEKPTVPTEETSIP) and 427–495 (PTEK…TTPS). Positions 501-550 (CPANAHYESCACPASCKHPKASCKPPCQPGCVCDPGLVFSNNSCIKASSC) constitute a TIL 1 domain. Residues Asn541 and Asn569 are each glycosylated (N-linked (GlcNAc...) asparagine). The 55-residue stretch at 551 to 605 (PCLYNNNNYEPEAEWFSPNCTELCHCWPGGRIECQISQCKTHTKCQLKNGQYECQ) folds into the VWFC 1 domain. Residues 610–787 (ATCFVYGDPH…WAQDEDKECQ (178 aa)) form the VWFD 1 domain. Disulfide bonds link Cys612–Cys747 and Cys634–Cys786. The TIL 2 domain maps to 881 to 934 (CPPNSRYSLCTSPCPKTCHTGYVGMPCPEQCLEGCECNPGFILSGLECVPSAQC). The 56-residue stretch at 935 to 990 (GCLDPSRGYFKVGEQWFKSDCKQLCICEGSNQIRCQPWKCGPHEVCSQQSGIYGCH) folds into the VWFC 2 domain. Residues 995–1176 (ATCSASGDPH…LEEGSETGCF (182 aa)) enclose the VWFD 2 domain. Intrachain disulfides connect Cys997-Cys1136 and Cys1019-Cys1175. N-linked (GlcNAc...) asparagine glycosylation is found at Asn1141, Asn1259, Asn1270, Asn1355, Asn1467, and Asn1483. The TIL 3 domain occupies 1267–1322 (CPPNSSYSPCGSPCPGTCLSLNHPKDCPITLPCVEGCECQNGYILSGTSCVPLNQC). Residues 1323 to 1379 (GCTDFEGSYHLVRESWYTDNTCSRLCTCSLHNNITCRQTACKPGQQCWAVDGLLRCR) enclose the VWFC 3 domain. Positions 1384-1564 (GVCQVTGDSR…KDNNIDPNCQ (181 aa)) constitute a VWFD 3 domain. 2 cysteine pairs are disulfide-bonded: Cys1386/Cys1525 and Cys1408/Cys1563. Residues 1561–1588 (PNCQKSQEGKGKPQEEQGPSGSSKKASC) form a disordered region. The span at 1577–1586 (QGPSGSSKKA) shows a compositional bias: polar residues. A glycan (N-linked (GlcNAc...) asparagine) is linked at Asn1662. The 57-residue stretch at 1670-1726 (CPAYSTYTNCLPSCSPSCFDPDGRCEGARAPSSCAEGCTCQPGYVLSKNKCVAKDQC) folds into the TIL 4 domain. The VWFC 4 domain maps to 1727 to 1782 (SCRDAQGGSIPSGKSWVSSGCSQKCACTEGSIQCRAFHCPSRSHCKLNSNGNSNCV). Positions 1787-1963 (DQCSIFGGPH…SWEVKTEDSV (177 aa)) constitute a VWFD 4 domain. Cys1789 and Cys1926 form a disulfide bridge. Residue Asn1997 is glycosylated (N-linked (GlcNAc...) asparagine). The TIL 5 domain maps to 2076-2129 (CPANTVYQSCMTPCPESCANLAAPRDCEGPCVEGCASLPGYAFSGAQSLPLANC). Residues 2130–2184 (GCTSNGIYYQLGHSFVTADCSQRCTCASSGVLLCEPFSCRPGESCTLGNLTRGCF) form the VWFC 5 domain. Asn2178 carries an N-linked (GlcNAc...) asparagine glycan. In terms of domain architecture, EGF-like spans 2185-2221 (RESPCLRNPCQNDGRCREQGTSFTCECEPGYGGHLCT). Cystine bridges form between Cys2189/Cys2200, Cys2194/Cys2209, and Cys2211/Cys2220. The chain crosses the membrane as a helical span at residues 2236-2256 (NLVAILLGMLVSLVVTVPVLA). Residues 2257–2282 (RKCVSRKRRRWREKTQSEPRSAPGRR) are Cytoplasmic-facing.

Probably forms covalent oligomers.

The protein resides in the cell membrane. In terms of biological role, binds in a species-specific manner to the zona pellucida of the egg. May be involved in gamete recognition and/or signaling. This chain is Zonadhesin (ZAN), found in Oryctolagus cuniculus (Rabbit).